A 222-amino-acid polypeptide reads, in one-letter code: THAP domain-containing protein 6 (222 aa).

A THAP-type zinc finger spans residues 1-89 (MVKCCSAIGC…LKPGVIPSIF (89 aa)). Residues 139 to 142 (EHSY) carry the HCFC1-binding motif (HBM) motif. The stretch at 149–194 (KKLKHKLDHVIGELEDTKESLRNVLDREKRFQKSLRKTIRELKDEC) forms a coiled coil.

In Homo sapiens (Human), this protein is THAP domain-containing protein 6 (THAP6).